We begin with the raw amino-acid sequence, 88 residues long: MANTAQARKRARQAVVQNAHNSALRSRLRTAVKAVRKAIAGGDKAAAANVFKQAQSTIDSIADKKIVHKNKAARAKSRLSAAIKAMGA.

The interval 1-20 (MANTAQARKRARQAVVQNAH) is disordered.

It belongs to the bacterial ribosomal protein bS20 family.

In terms of biological role, binds directly to 16S ribosomal RNA. This is Small ribosomal subunit protein bS20 from Ralstonia nicotianae (strain ATCC BAA-1114 / GMI1000) (Ralstonia solanacearum).